The primary structure comprises 222 residues: Peptide methionine sulfoxide reductase MsrA (222 aa).

The active site involves cysteine 60.

Belongs to the MsrA Met sulfoxide reductase family.

It catalyses the reaction L-methionyl-[protein] + [thioredoxin]-disulfide + H2O = L-methionyl-(S)-S-oxide-[protein] + [thioredoxin]-dithiol. It carries out the reaction [thioredoxin]-disulfide + L-methionine + H2O = L-methionine (S)-S-oxide + [thioredoxin]-dithiol. Its function is as follows. Has an important function as a repair enzyme for proteins that have been inactivated by oxidation. Catalyzes the reversible oxidation-reduction of methionine sulfoxide in proteins to methionine. The protein is Peptide methionine sulfoxide reductase MsrA of Pseudomonas entomophila (strain L48).